The following is a 196-amino-acid chain: Carnitine operon protein CaiE (196 aa).

Residues T173 to R196 form a disordered region. Positions Q187 to R196 are enriched in polar residues.

Belongs to the transferase hexapeptide repeat family.

Its pathway is amine and polyamine metabolism; carnitine metabolism. Overproduction of CaiE stimulates the activity of CaiB and CaiD. This Escherichia coli O7:K1 (strain IAI39 / ExPEC) protein is Carnitine operon protein CaiE.